The chain runs to 435 residues: NAD-specific glutamate dehydrogenase A (435 aa).

Residues 1-28 form a disordered region; the sequence is MTMASKSDSTHDESGDEAADSTEPESAL. The span at 14–23 shows a compositional bias: acidic residues; it reads SGDEAADSTE. The active site involves Lys126.

Belongs to the Glu/Leu/Phe/Val dehydrogenases family. As to quaternary structure, homohexamer. Post-translationally, the N-terminus is blocked.

The catalysed reaction is L-glutamate + NAD(+) + H2O = 2-oxoglutarate + NH4(+) + NADH + H(+). With respect to regulation, inhibited by ethanol, acetone, acetonitrile and 2-propanol (65 to 70% inhibition) and to a lesser extent by methanol and dimethyl formamide (26 and 49 % inhibition respectively). No effect of glycerol or DMSO. This is NAD-specific glutamate dehydrogenase A (gdhX) from Halobacterium salinarum (Halobacterium halobium).